Here is a 420-residue protein sequence, read N- to C-terminus: L-rhamnose isomerase (420 aa).

Mn(2+)-binding residues include histidine 264, aspartate 296, and aspartate 298.

This sequence belongs to the rhamnose isomerase family. Requires Mn(2+) as cofactor.

It localises to the cytoplasm. It catalyses the reaction L-rhamnopyranose = L-rhamnulose. Its pathway is carbohydrate degradation; L-rhamnose degradation; glycerone phosphate from L-rhamnose: step 1/3. In terms of biological role, catalyzes the interconversion of L-rhamnose and L-rhamnulose. This is L-rhamnose isomerase from Listeria monocytogenes serotype 4b (strain F2365).